Reading from the N-terminus, the 487-residue chain is Bifunctional protein HldE (487 aa).

The interval 1–329 (MLHAVETAFY…GALLTDATYE (329 aa)) is ribokinase. 204-207 (NRGE) contributes to the ATP binding site. The active site involves Asp274. Residues 356-487 (FTNGCFDLLH…GIVQRISAQK (132 aa)) form a cytidylyltransferase region.

It in the N-terminal section; belongs to the carbohydrate kinase PfkB family. This sequence in the C-terminal section; belongs to the cytidylyltransferase family. In terms of assembly, homodimer.

The catalysed reaction is D-glycero-beta-D-manno-heptose 7-phosphate + ATP = D-glycero-beta-D-manno-heptose 1,7-bisphosphate + ADP + H(+). The enzyme catalyses D-glycero-beta-D-manno-heptose 1-phosphate + ATP + H(+) = ADP-D-glycero-beta-D-manno-heptose + diphosphate. The protein operates within nucleotide-sugar biosynthesis; ADP-L-glycero-beta-D-manno-heptose biosynthesis; ADP-L-glycero-beta-D-manno-heptose from D-glycero-beta-D-manno-heptose 7-phosphate: step 1/4. It functions in the pathway nucleotide-sugar biosynthesis; ADP-L-glycero-beta-D-manno-heptose biosynthesis; ADP-L-glycero-beta-D-manno-heptose from D-glycero-beta-D-manno-heptose 7-phosphate: step 3/4. In terms of biological role, catalyzes the phosphorylation of D-glycero-D-manno-heptose 7-phosphate at the C-1 position to selectively form D-glycero-beta-D-manno-heptose-1,7-bisphosphate. Catalyzes the ADP transfer from ATP to D-glycero-beta-D-manno-heptose 1-phosphate, yielding ADP-D-glycero-beta-D-manno-heptose. This Magnetococcus marinus (strain ATCC BAA-1437 / JCM 17883 / MC-1) protein is Bifunctional protein HldE.